The following is a 313-amino-acid chain: 4-diphosphocytidyl-2-C-methyl-D-erythritol kinase (313 aa).

The active site involves K10. 95-105 (PVTAGLGGGSS) is an ATP binding site. D136 is a catalytic residue. Residues 289–313 (HPRVSPWRSPRSASSRSTRRSSRPT) are disordered. Low complexity predominate over residues 292–304 (VSPWRSPRSASSR).

The protein belongs to the GHMP kinase family. IspE subfamily.

It catalyses the reaction 4-CDP-2-C-methyl-D-erythritol + ATP = 4-CDP-2-C-methyl-D-erythritol 2-phosphate + ADP + H(+). It participates in isoprenoid biosynthesis; isopentenyl diphosphate biosynthesis via DXP pathway; isopentenyl diphosphate from 1-deoxy-D-xylulose 5-phosphate: step 3/6. Catalyzes the phosphorylation of the position 2 hydroxy group of 4-diphosphocytidyl-2C-methyl-D-erythritol. The chain is 4-diphosphocytidyl-2-C-methyl-D-erythritol kinase from Anaeromyxobacter dehalogenans (strain 2CP-1 / ATCC BAA-258).